Reading from the N-terminus, the 70-residue chain is uncharacterized protein (70 aa).

The protein belongs to the opacity porin family.

This is an uncharacterized protein from Haemophilus influenzae (strain ATCC 51907 / DSM 11121 / KW20 / Rd).